We begin with the raw amino-acid sequence, 107 residues long: Large ribosomal subunit protein uL24 (107 aa).

Belongs to the universal ribosomal protein uL24 family. As to quaternary structure, part of the 50S ribosomal subunit.

Its function is as follows. One of two assembly initiator proteins, it binds directly to the 5'-end of the 23S rRNA, where it nucleates assembly of the 50S subunit. Functionally, one of the proteins that surrounds the polypeptide exit tunnel on the outside of the subunit. This chain is Large ribosomal subunit protein uL24, found in Nitratidesulfovibrio vulgaris (strain DSM 19637 / Miyazaki F) (Desulfovibrio vulgaris).